The sequence spans 1085 residues: Solute carrier family 12 member 4 (1085 aa).

Residues 1–119 are Cytoplasmic-facing; it reads MPHFTVVPVD…RRAAKAPSMG (119 aa). Phosphoserine is present on residues serine 24, serine 47, serine 81, and serine 88. Residues 120–141 form a discontinuously helical membrane-spanning segment; the sequence is TLMGVYLPCLQNIFGVILFLRL. K(+) is bound by residues asparagine 131 and isoleucine 132. Residues 142–149 are Extracellular-facing; that stretch reads TWMVGTAG. A helical membrane pass occupies residues 150 to 172; it reads VLQALLIVLICCCCTLLTAISMS. The Cytoplasmic segment spans residues 173 to 196; the sequence is AIATNGVVPAGGSYFMISRSLGPE. A helical membrane pass occupies residues 197–225; it reads FGGAVGLCFYLGTTFAAAMYILGAIEILL. Position 216 (tyrosine 216) interacts with K(+). Topologically, residues 226–248 are extracellular; it reads TYIAPPAAIFYPSGTHDMSSATL. The next 2 helical transmembrane spans lie at 249 to 271 and 272 to 297; these read NNMR…VGVK and YVNK…GGIK. At 298–419 the chain is on the extracellular side; it reads SIFDPPVFPV…LYVVADIATS (122 aa). Cysteine 308 and cysteine 323 form a disulfide bridge. N-linked (GlcNAc...) asparagine glycans are attached at residues asparagine 312, asparagine 331, and asparagine 347. Cysteine 343 and cysteine 353 are disulfide-bonded. A helical transmembrane segment spans residues 420–440; it reads FTVLVGIFFPSVTGIMAGSNR. Residues proline 429 and threonine 432 each contribute to the K(+) site. 3 residues coordinate chloride: glycine 433, isoleucine 434, and methionine 435. Residues 441-450 lie on the Cytoplasmic side of the membrane; that stretch reads SGDLRDAQKS. Residues 451–473 traverse the membrane as a helical segment; it reads IPVGTILAIVTTSLVYFSSVILF. Topologically, residues 474-504 are extracellular; that stretch reads GACIEGVVLRDKYGDGVSRNLVVGTLAWPSP. Residues 505–531 form a helical membrane-spanning segment; it reads WVIVVGSFFSTCGAGLQSLTGAPRLLQ. Residues 532-554 lie on the Cytoplasmic side of the membrane; the sequence is AIAKDNIIPFLRVFGHGKANGEP. The next 2 helical transmembrane spans lie at 555–575 and 576–598; these read TWAL…ASLD and MVAP…ACAV. Residue tyrosine 589 participates in chloride binding. The Cytoplasmic segment spans residues 599–612; the sequence is QTLLRTPNWRPRFK. Transmembrane regions (helical) follow at residues 613–635 and 636–651; these read YYHW…VSSW and YYAL…IYKY. Residues 652 to 1085 are Cytoplasmic-facing; it reads IEYQGAEKEW…GGREVITIYS (434 aa). Residues 665 to 681 form a scissor helix region; sequence IRGLSLSAARYALLRLE. ATP-binding residues include leucine 697, lysine 699, lysine 707, tyrosine 708, and valine 730. Serine 734 carries the post-translational modification Phosphoserine. ATP contacts are provided by glycine 794, tryptophan 795, and tyrosine 797. 2 positions are modified to phosphoserine: serine 916 and serine 967. At threonine 983 the chain carries Phosphothreonine. Serine 1050 bears the Phosphoserine mark.

This sequence belongs to the SLC12A transporter family. K/Cl co-transporter subfamily. In terms of assembly, homodimer; adopts a domain-swap conformation at the scissor helices connecting the transmembrane domain and C-terminal domain. Heterodimer with other K-Cl cotransporters. Phosphorylated, phosphorylation may regulate transporter activity. As to expression, detected in embryo, adult heart, erythrocytes, brain, kidney, stomach, ovary, testis and liver.

Its subcellular location is the cell membrane. The catalysed reaction is K(+)(in) + chloride(in) = K(+)(out) + chloride(out). Inhibited by WNK3. Mediates electroneutral potassium-chloride cotransport when activated by cell swelling. May contribute to cell volume homeostasis in single cells. May be involved in the regulation of basolateral Cl(-) exit in NaCl absorbing epithelia. The sequence is that of Solute carrier family 12 member 4 (Slc12a4) from Mus musculus (Mouse).